Consider the following 514-residue polypeptide: Periplasmic [NiFeSe] hydrogenase large subunit (514 aa).

Position 52 (E52) interacts with Fe cation. Residues C71 and C74 each coordinate Ni(2+). C74 and I445 together coordinate Fe cation. Positions 493 and 496 each coordinate Ni(2+). U493 is a non-standard amino acid (selenocysteine). Fe cation is bound by residues C496 and H499.

The protein belongs to the [NiFe]/[NiFeSe] hydrogenase large subunit family. As to quaternary structure, heterodimer of a large and a small subunit. Fe cation is required as a cofactor. Ni(2+) serves as cofactor.

The protein localises to the periplasm. It catalyses the reaction H2 + A = AH2. This chain is Periplasmic [NiFeSe] hydrogenase large subunit, found in Desulfomicrobium baculatum (Desulfovibrio baculatus).